Here is a 324-residue protein sequence, read N- to C-terminus: Ribose 1,5-bisphosphate isomerase (324 aa).

Residues 22–25 and R65 each bind substrate; that span reads RGAG. The active-site Proton acceptor is the C135. 137-139 provides a ligand contact to substrate; sequence SKA. Residue D204 is the Proton donor of the active site. Substrate is bound by residues 214 to 215 and K240; that span reads NK.

The protein belongs to the eIF-2B alpha/beta/delta subunits family. R15P isomerase subfamily.

The enzyme catalyses alpha-D-ribose 1,5-bisphosphate = D-ribulose 1,5-bisphosphate. Catalyzes the isomerization of ribose 1,5-bisphosphate (R15P) to ribulose 1,5-bisphosphate (RuBP), the CO(2) acceptor and substrate for RubisCO. Functions in an archaeal AMP degradation pathway, together with AMP phosphorylase and RubisCO. This Pyrococcus horikoshii (strain ATCC 700860 / DSM 12428 / JCM 9974 / NBRC 100139 / OT-3) protein is Ribose 1,5-bisphosphate isomerase.